Reading from the N-terminus, the 604-residue chain is Glutamine--fructose-6-phosphate aminotransferase [isomerizing] (604 aa).

Cys2 functions as the Nucleophile; for GATase activity in the catalytic mechanism. Residues 2-218 (CGIVGVVGNT…DKELVIVKKD (217 aa)) form the Glutamine amidotransferase type-2 domain. 2 consecutive SIS domains span residues 284–423 (IIKS…ANGK) and 456–594 (VEQL…VDKP). Lys599 (for Fru-6P isomerization activity) is an active-site residue.

In terms of assembly, homodimer.

Its subcellular location is the cytoplasm. It catalyses the reaction D-fructose 6-phosphate + L-glutamine = D-glucosamine 6-phosphate + L-glutamate. In terms of biological role, catalyzes the first step in hexosamine metabolism, converting fructose-6P into glucosamine-6P using glutamine as a nitrogen source. This Streptococcus agalactiae serotype III (strain NEM316) protein is Glutamine--fructose-6-phosphate aminotransferase [isomerizing].